A 245-amino-acid polypeptide reads, in one-letter code: Ribonuclease PH (245 aa).

Phosphate-binding positions include Arg87 and 125 to 127 (GTR).

This sequence belongs to the RNase PH family. As to quaternary structure, homohexameric ring arranged as a trimer of dimers.

It catalyses the reaction tRNA(n+1) + phosphate = tRNA(n) + a ribonucleoside 5'-diphosphate. Functionally, phosphorolytic 3'-5' exoribonuclease that plays an important role in tRNA 3'-end maturation. Removes nucleotide residues following the 3'-CCA terminus of tRNAs; can also add nucleotides to the ends of RNA molecules by using nucleoside diphosphates as substrates, but this may not be physiologically important. Probably plays a role in initiation of 16S rRNA degradation (leading to ribosome degradation) during starvation. The chain is Ribonuclease PH from Streptomyces griseus subsp. griseus (strain JCM 4626 / CBS 651.72 / NBRC 13350 / KCC S-0626 / ISP 5235).